Reading from the N-terminus, the 408-residue chain is DNA primase DnaG (408 aa).

Residues 171 to 250 (DAIIIVEGRA…AYSPRGKSVE (80 aa)) enclose the Toprim domain. Mg(2+) contacts are provided by Glu-177, Asp-219, and Asp-221. Residues 276–323 (AEENVERLPPSAAPAEVRAPAGAGRTSEGERPPRREWDSKPPSTLGEH) form a disordered region. Residues 284–298 (PPSAAPAEVRAPAGA) are compositionally biased toward low complexity. The span at 302–314 (SEGERPPRREWDS) shows a compositional bias: basic and acidic residues.

It belongs to the archaeal DnaG primase family. In terms of assembly, forms a ternary complex with MCM helicase and DNA. Requires Mg(2+) as cofactor.

The enzyme catalyses ssDNA + n NTP = ssDNA/pppN(pN)n-1 hybrid + (n-1) diphosphate.. Functionally, RNA polymerase that catalyzes the synthesis of short RNA molecules used as primers for DNA polymerase during DNA replication. This chain is DNA primase DnaG, found in Methanoculleus marisnigri (strain ATCC 35101 / DSM 1498 / JR1).